The chain runs to 853 residues: DNA mismatch repair protein MutS (853 aa).

614 to 621 (GPNMGGKS) contacts ATP.

This sequence belongs to the DNA mismatch repair MutS family.

Its function is as follows. This protein is involved in the repair of mismatches in DNA. It is possible that it carries out the mismatch recognition step. This protein has a weak ATPase activity. The protein is DNA mismatch repair protein MutS of Escherichia coli O1:K1 / APEC.